We begin with the raw amino-acid sequence, 622 residues long: V-type ATP synthase subunit I 1 (622 aa).

The next 8 helical transmembrane spans lie at 306–326 (WVNL…YWEV), 328–348 (ISGF…ADAG), 373–393 (PAWC…ALVC), 428–448 (QMHV…LIVV), 459–479 (AEFG…NLIV), 485–505 (PLTG…FIFV), 532–552 (VFAD…GGAI), and 562–582 (PLFA…GHGL).

The protein belongs to the V-ATPase 116 kDa subunit family.

The protein localises to the cell membrane. Its function is as follows. Produces ATP from ADP in the presence of a proton gradient across the membrane. This chain is V-type ATP synthase subunit I 1 (atpI1), found in Treponema pallidum (strain Nichols).